A 144-amino-acid polypeptide reads, in one-letter code: uncharacterized protein (144 aa).

Residues 4–111 (VFCAIIAGEA…LPPRNGDKLS (108 aa)) enclose the HIT domain. A Histidine triad motif motif is present at residues 96–100 (HVHLH).

This is an uncharacterized protein from Mycobacterium tuberculosis (strain CDC 1551 / Oshkosh).